A 731-amino-acid polypeptide reads, in one-letter code: NADH-ubiquinone oxidoreductase 75 kDa subunit, mitochondrial (731 aa).

The transit peptide at 1 to 27 (MIRAPLVKALGALGSPTHQMASRAVRT) directs the protein to the mitochondrion. A 2Fe-2S ferredoxin-type domain is found at 40–118 (EKIEVFVDDI…GWRIKTNSDL (79 aa)). Residues C74, C85, C88, and C102 each contribute to the [2Fe-2S] cluster site. The 4Fe-4S His(Cys)3-ligated-type domain occupies 118–157 (LTRKAREGVMEFLLMNHPLDCPICDQGGECDLQDQAMAFG). H134, C138, C141, C147, C190, C193, C196, and C240 together coordinate [4Fe-4S] cluster. The 4Fe-4S Mo/W bis-MGD-type domain occupies 259-315 (IRKVSSIDVLDAVGSNIVVSTRTNEVLRILPRENEDVNEEWLADKSRFACDGLKRQR).

The protein belongs to the complex I 75 kDa subunit family. Complex I is composed of about 45 different subunits. [2Fe-2S] cluster serves as cofactor. Requires [4Fe-4S] cluster as cofactor.

The protein resides in the mitochondrion inner membrane. The enzyme catalyses a ubiquinone + NADH + 5 H(+)(in) = a ubiquinol + NAD(+) + 4 H(+)(out). Functionally, core subunit of the mitochondrial membrane respiratory chain NADH dehydrogenase (Complex I) that is believed to belong to the minimal assembly required for catalysis. Complex I functions in the transfer of electrons from NADH to the respiratory chain. The immediate electron acceptor for the enzyme is believed to be ubiquinone. This is the largest subunit of complex I and it is a component of the iron-sulfur (IP) fragment of the enzyme. It may form part of the active site crevice where NADH is oxidized. This chain is NADH-ubiquinone oxidoreductase 75 kDa subunit, mitochondrial, found in Drosophila melanogaster (Fruit fly).